A 261-amino-acid polypeptide reads, in one-letter code: uncharacterized protein (261 aa).

The region spanning 7-122 (TAVLADDEPL…RLASCCEKLQ (116 aa)) is the Response regulatory domain. Aspartate 54 carries the 4-aspartylphosphate modification. In terms of domain architecture, HTH LytTR-type spans 157-261 (LKASKGEEIH…RALQHLFKVS (105 aa)).

This is an uncharacterized protein from Vibrio cholerae serotype O1 (strain ATCC 39315 / El Tor Inaba N16961).